The following is a 223-amino-acid chain: Capsid protein (223 aa).

Positions 1-19 are enriched in basic and acidic residues; it reads MDDETKKLKNKNKETKEGD. The tract at residues 1–21 is disordered; the sequence is MDDETKKLKNKNKETKEGDDV.

This sequence belongs to the closteroviridae capsid protein family. In terms of processing, consists of at least two size variants, CP1 and CP2, which result of post-translational proteolysis at sites approximately 12 to 15 and 26 AA from the N-terminus respectively.

The protein resides in the virion. The protein is Capsid protein of Citrus tristeza virus (isolate T36) (CTV).